The primary structure comprises 263 residues: Endonuclease 8 (263 aa).

P2 serves as the catalytic Schiff-base intermediate with DNA. Catalysis depends on E3, which acts as the Proton donor. K53 serves as the catalytic Proton donor; for beta-elimination activity. DNA contacts are provided by Q70, R125, and N169. Residues 229–263 (KVFHREGKACERCGGVIERSTLSSRPFYGCPVCQK) form an FPG-type zinc finger. Residue R253 is the Proton donor; for delta-elimination activity of the active site.

It belongs to the FPG family. Zn(2+) serves as cofactor.

It carries out the reaction 2'-deoxyribonucleotide-(2'-deoxyribose 5'-phosphate)-2'-deoxyribonucleotide-DNA = a 3'-end 2'-deoxyribonucleotide-(2,3-dehydro-2,3-deoxyribose 5'-phosphate)-DNA + a 5'-end 5'-phospho-2'-deoxyribonucleoside-DNA + H(+). In terms of biological role, involved in base excision repair of DNA damaged by oxidation or by mutagenic agents. Acts as a DNA glycosylase that recognizes and removes damaged bases. Has a preference for oxidized pyrimidines, such as thymine glycol, 5,6-dihydrouracil and 5,6-dihydrothymine. Has AP (apurinic/apyrimidinic) lyase activity and introduces nicks in the DNA strand. Cleaves the DNA backbone by beta-delta elimination to generate a single-strand break at the site of the removed base with both 3'- and 5'-phosphates. This chain is Endonuclease 8, found in Enterobacter sp. (strain 638).